The following is a 322-amino-acid chain: Ferric-anguibactin-binding protein FatB (322 aa).

A signal peptide spans 1–22 (MFKSTLNIAVAIVCSSLVTLTG). The N-palmitoyl cysteine moiety is linked to residue cysteine 23. Residue cysteine 23 is the site of S-diacylglycerol cysteine attachment. The Fe/B12 periplasmic-binding domain occupies 57-322 (RVAALDMNEV…IDDIIKGYQS (266 aa)).

The protein belongs to the bacterial solute-binding protein 8 family. As to quaternary structure, part of an iron transport system composed of the outer membrane receptor FatA, the periplasmic binding protein FatB and the inner membrane proteins FatC and FatD.

It localises to the cell inner membrane. Involved in the uptake of iron in complex with the siderophore anguibactin. Binds ferric-anguibactin in the periplasm and mediates its transport into the cytoplasm. This chain is Ferric-anguibactin-binding protein FatB, found in Vibrio anguillarum (strain ATCC 68554 / 775) (Listonella anguillarum).